The chain runs to 259 residues: MTFPNINPIIFYLGPLAISWYSLSYVVGILLSWFYANKIIEKFKPQINKKTLEDFITYAVIGIIVGGRLGFVLLYNPSRYFLHPIDILKTYEGGMSFHGGALGVIIAAYLFCRKYKVNFLSLTDIIAAVVPIGLFLGRIANFINGELYGRITNASFGMIFPNSDLMPRHPSQLYEAFFEGLVLFCILAYATFKNKTLKNCGLNSGLFLTFYALFRIAIEIFREPDIQIGFILDNLTMGQILSVPMLILGSYLICQSNPK.

A run of 4 helical transmembrane segments spans residues 9–29 (IIFY…VVGI), 55–75 (FITY…VLLY), 92–112 (EGGM…YLFC), and 117–137 (VNFL…LFLG). Arg-138 contributes to the a 1,2-diacyl-sn-glycero-3-phospho-(1'-sn-glycerol) binding site. A run of 3 helical transmembrane segments spans residues 172 to 192 (QLYE…YATF), 201 to 221 (GLNS…IEIF), and 228 to 248 (IGFI…MLIL).

This sequence belongs to the Lgt family.

The protein localises to the cell inner membrane. It catalyses the reaction L-cysteinyl-[prolipoprotein] + a 1,2-diacyl-sn-glycero-3-phospho-(1'-sn-glycerol) = an S-1,2-diacyl-sn-glyceryl-L-cysteinyl-[prolipoprotein] + sn-glycerol 1-phosphate + H(+). It functions in the pathway protein modification; lipoprotein biosynthesis (diacylglyceryl transfer). In terms of biological role, catalyzes the transfer of the diacylglyceryl group from phosphatidylglycerol to the sulfhydryl group of the N-terminal cysteine of a prolipoprotein, the first step in the formation of mature lipoproteins. The protein is Phosphatidylglycerol--prolipoprotein diacylglyceryl transferase of Rickettsia akari (strain Hartford).